The sequence spans 297 residues: uncharacterized protein (297 aa).

Glutamate 46 is a catalytic residue.

The protein belongs to the PhzF family. As to quaternary structure, homodimer and homotetramer.

This is an uncharacterized protein from Escherichia coli O157:H7.